Consider the following 348-residue polypeptide: Mycothiol acetyltransferase (348 aa).

N-acetyltransferase domains lie at 12 to 156 (TSMR…VDVT) and 169 to 330 (VAVR…HGTP). Residue glutamate 44 coordinates 1D-myo-inositol 2-(L-cysteinylamino)-2-deoxy-alpha-D-glucopyranoside. 91 to 93 (LVV) contacts acetyl-CoA. 3 residues coordinate 1D-myo-inositol 2-(L-cysteinylamino)-2-deoxy-alpha-D-glucopyranoside: glutamate 196, lysine 235, and glutamate 253. Acetyl-CoA contacts are provided by residues 257–259 (VGV) and 264–270 (QGLGMGR). Tyrosine 291 contributes to the 1D-myo-inositol 2-(L-cysteinylamino)-2-deoxy-alpha-D-glucopyranoside binding site. 296-301 (NTVAVH) is a binding site for acetyl-CoA. The tract at residues 320–348 (PPAGSPAHGTPLVRVTDTPSSPGDATMGS) is disordered. Residues 336–348 (DTPSSPGDATMGS) are compositionally biased toward polar residues.

The protein belongs to the acetyltransferase family. MshD subfamily. In terms of assembly, monomer.

It carries out the reaction 1D-myo-inositol 2-(L-cysteinylamino)-2-deoxy-alpha-D-glucopyranoside + acetyl-CoA = mycothiol + CoA + H(+). Its function is as follows. Catalyzes the transfer of acetyl from acetyl-CoA to desacetylmycothiol (Cys-GlcN-Ins) to form mycothiol. The sequence is that of Mycothiol acetyltransferase from Cellulomonas flavigena (strain ATCC 482 / DSM 20109 / BCRC 11376 / JCM 18109 / NBRC 3775 / NCIMB 8073 / NRS 134).